The sequence spans 462 residues: Transcription factor-like protein EUC1 (462 aa).

2 disordered regions span residues 11–43 and 66–97; these read GFGGYGSLDDDDSDRDSERRNHDLGQRTITTSP and RPTDAAQPPIVSTSTSASATEPTNRIGPGRIK. 2 positions are modified to phosphoserine: Ser-17 and Ser-23. Over residues 26 to 35 the composition is skewed to basic and acidic residues; that stretch reads DSERRNHDLG. Residues 81–140 form a homodimerization region region; the sequence is SASATEPTNRIGPGRIKETPETNFNAFLIAQLTRMEEQNANLKEEISLMKKEQELFFLEN. Residues 105 to 135 adopt a coiled-coil conformation; that stretch reads NAFLIAQLTRMEEQNANLKEEISLMKKEQEL. Disordered stretches follow at residues 190–214 and 226–289; these read QEAARVGNPSTSTQAHQSQSRSTNW and GDPR…RNRR. Residues 197–214 show a composition bias toward polar residues; sequence NPSTSTQAHQSQSRSTNW. Lys-231 is covalently cross-linked (Glycyl lysine isopeptide (Lys-Gly) (interchain with G-Cter in SUMO)). Phosphoserine is present on residues Ser-237 and Ser-249. Positions 240-251 are enriched in acidic residues; it reads ENGEYDGNESDE. A compositionally biased stretch (polar residues) spans 252–282; sequence NATTRNLPLNNPDSVSNADDSNNQLDGTGNE. Thr-254 is subject to Phosphothreonine. The GCR1 DNA-binding region stretch occupies residues 296–385; the sequence is YKLNRAIQNV…QAIKVVENIR (90 aa). Over residues 441 to 455 the composition is skewed to polar residues; sequence SLQQPHSIPNSSTGT. The disordered stretch occupies residues 441-462; the sequence is SLQQPHSIPNSSTGTPEHDQDT.

In terms of assembly, homodimer. Interacts with SLX5. Post-translationally, sumoylated at Lys-231 and subsequently ubiquitinated by the SUMO-targeted ubiquitin ligase (STUbL) complex SLX5/SLX8.

It localises to the chromosome. Its function is as follows. Transcription factor-like protein that binds to specific DNA motifs called ub-HS-motif associated with several locations where proteins other than histone H2B are ubiquitinated (ub-hotspots). Ubiquitination at these sites depends on the SUMO-targeted ubiquitin ligase (STUbL) complex SLX5/SLX8 and protein turnover on the CDC48 segregase. UBC9, SIZ1, or SIZ2 sumoylate DNA-bound EUC1 to stabilize its DNA-binding. Sumoylated EUC1 acts a cofactor required for the recruitment of the SLX5/SLX8 STUbL complex via specific contacts between EUC1 and SLX5, as well as an additional SUMO-mediated interaction. SLX5/SLX8 then ubiquitinates EUC1 and presumably other targets at ub-hotspots, and the CDC48/UFD1/NPL4 complex, together with UBX4 and UBX5, removes Lys-48-linked ubiquitinated proteins from chromatin. Ubiquitinated proteins could be either degraded by the proteasome or recycled by deubiquitination. EUC1 itself does not seem to underlie extensive turnover, as it is a very stable protein. EUC1 is able to act as a transcription factor, but its function at ub-hotspots does not seem to depend on this ability. EUC1-mediated ub-hotspots are crucial during stress responses when gene expression control is impaired. This chain is Transcription factor-like protein EUC1, found in Saccharomyces cerevisiae (strain ATCC 204508 / S288c) (Baker's yeast).